Consider the following 729-residue polypeptide: Zorya protein ZorA (729 aa).

Helical transmembrane passes span 20–40 (PATV…FYFF), 135–155 (LPGI…MIGL), and 177–197 (VLYA…ITWL).

The protein belongs to the MotA family.

It is found in the cell inner membrane. Functionally, component of antiviral defense system Zorya type I, composed of ZorA, ZorB, ZorC and ZorD. Expression of Zorya type I in E.coli (strain MG1655) confers 10,000-fold resistance to phage SECphi27, 100-fold resistance to lambda, and 10-fold resistance to T7. While most T7 infected Zorya-containing cells undergo abortive infection, a minority produce viable phage progeny. These eventually accumulate to a high multiplicity of infection, leading to culture collapse by 2 hours after initial infection. ZorA and ZorB probably assemble in the cell inner membrane and exert their effect there. The protein is Zorya protein ZorA of Escherichia coli O139:H28 (strain E24377A / ETEC).